The following is an 800-amino-acid chain: Nucleolar complex protein 3 homolog (800 aa).

Residues S37 to L90 are disordered. The segment covering K40–Q51 has biased composition (basic residues). Basic and acidic residues predominate over residues A52–E77. Residues R78–L90 show a composition bias toward acidic residues. Residue K333 forms a Glycyl lysine isopeptide (Lys-Gly) (interchain with G-Cter in SUMO2) linkage. A coiled-coil region spans residues F450–K489.

The protein belongs to the CBF/MAK21 family.

It localises to the nucleus. Its subcellular location is the nucleolus. The polypeptide is Nucleolar complex protein 3 homolog (NOC3L) (Cricetulus griseus (Chinese hamster)).